The following is a 415-amino-acid chain: MKFNEAPSADGVWHHCHLLPAADPAQAIRDGAIVVEQGRIAWLGAFAALPDVYRHLPRHDANGAWITPGLVDCHTHLVYGGQRADEFAMRLAGASYEEIARAGGGIVSTVRATREADEATLFAQASARLEPLLAEGVTAIEIKSGYGLSLEAERKQLRVARQLGETYGVAVHTTFLGAHALPPEYAGRADAYIELVCETMLPALAAEGLVDAVDAFCEGIGFSIAQTTRVFEAAARHGLPVKLHAEQLSNLGGAALAARHKAISADHLEHLDEAGVVAMAEAGTVAVLLPGAYYFLRDTQLPPLALLRKHGVPMAISTDHNPGTSPTTSLLLMMNMGCTIFRMTVPEVLAGVTTHAARALGAADRHGLLAVDRAADFVLWQVASPAELAYWFGRNPCAAVVRRGRVFRKGEGWQR.

Fe(3+) is bound by residues H74 and H76. Zn(2+) is bound by residues H74 and H76. Residues R83, Y146, and H179 each coordinate 4-imidazolone-5-propanoate. N-formimidoyl-L-glutamate is bound at residue Y146. H244 contacts Fe(3+). H244 serves as a coordination point for Zn(2+). Residue Q247 participates in 4-imidazolone-5-propanoate binding. D319 serves as a coordination point for Fe(3+). D319 provides a ligand contact to Zn(2+). N-formimidoyl-L-glutamate is bound by residues N321 and G323. 4-imidazolone-5-propanoate is bound at residue T324.

Belongs to the metallo-dependent hydrolases superfamily. HutI family. It depends on Zn(2+) as a cofactor. The cofactor is Fe(3+).

It localises to the cytoplasm. The enzyme catalyses 4-imidazolone-5-propanoate + H2O = N-formimidoyl-L-glutamate. It participates in amino-acid degradation; L-histidine degradation into L-glutamate; N-formimidoyl-L-glutamate from L-histidine: step 3/3. Functionally, catalyzes the hydrolytic cleavage of the carbon-nitrogen bond in imidazolone-5-propanoate to yield N-formimidoyl-L-glutamate. It is the third step in the universal histidine degradation pathway. The sequence is that of Imidazolonepropionase from Cupriavidus metallidurans (strain ATCC 43123 / DSM 2839 / NBRC 102507 / CH34) (Ralstonia metallidurans).